The primary structure comprises 406 residues: Acetyltransferase sirH (406 aa).

Helical transmembrane passes span 9-29 (IFIE…FALG), 32-52 (AHTF…CQSL), 63-83 (LLSN…WILL), 295-315 (VQLF…ALLC), 323-343 (SALF…HVIA), and 358-378 (FIGF…WVGS).

It belongs to the wax synthase family.

Its subcellular location is the membrane. It functions in the pathway mycotoxin biosynthesis. Acetyltransferase; part of the gene cluster that mediates the biosynthesis of sirodesmin PL, an epipolythiodioxopiperazine (ETP) characterized by a disulfide bridged cyclic dipeptide and that acts as a phytotoxin which is involved in the blackleg didease of canola. SirD catalyzes the O-prenylation of L-tyrosine (L-Tyr) in the presence of dimethylallyl diphosphate (DMAPP) to yield 4-O-dimethylallyl-L-Tyr, and therefore represents probably the first pathway-specific enzyme in the biosynthesis of sirodesmin PL. 4-O-dimethylallyl-L-Tyr, then undergoes condensation with L-Ser in a reaction catalyzed by the non-ribosomal peptide synthase sirP to form the diketopiperazine (DKP) backbone. Further bishydroxylation of the DKP performed by the cytochrome P450 monooxygenase sirC leads to the production of the intermediate phomamide. This step is essential to form the reactive thiol group required for toxicity of sirodesmin PL. The next steps of sirodesmin biosynthesis are not well understood yet, but some predictions could be made from intermediate compounds identification. Phomamide is converted into phomalizarine via oxidation, probably by sirT. Further oxidation, methylation (by sirM or sirN) and reduction steps convert phomalizarine to deacetyl sirodesmin. Finally, acetyltransferase sirH probably acetylates deacetyl sirodesmin to produce sirodesmin PL. This is Acetyltransferase sirH from Leptosphaeria maculans (Blackleg fungus).